A 465-amino-acid polypeptide reads, in one-letter code: MNVTSLFSFTSPAVKRLLGWKQGDEEEKWAEKAVDALVKKLKKKKGAMEELEKALSCPGQPSNCVTIPRSLDGRLQVSHRKGLPHVIYCRVWRWPDLQSHHELKPLECCEFPFGSKQKEVCINPYHYKRVESPVLPPVLVPRHSEYNPQHSLLAQFRNLGQNEPHMPLNATFPDSFQQPNSHPFPHSPNSSYPNSPGGSSSTYPHSPTSSDPGSPFQMPADTPPPAYLPPEDPMAQDGSQPMDTNMMAPPLPAEISRGDVQAVAYEEPKHWCSIVYYELNNRVGEAFHASSTSVLVDGFTDPSNNKNRFCLGLLSNVNRNSTIENTRRHIGKGVHLYYVGGEVYAECLSDSSIFVQSRNCNYHHGFHPTTVCKIPSGCSLKIFNNQEFAQLLAQSVNHGFETVYELTKMCTIRMSFVKGWGAEYHRQDVTSTPCWIEIHLHGPLQWLDKVLTQMGSPHNPISSVS.

Met1 is subject to N-acetylmethionine. Positions 12–136 (PAVKRLLGWK…YKRVESPVLP (125 aa)) constitute an MH1 domain. The Zn(2+) site is built by Cys64, Cys109, Cys121, and His126. The disordered stretch occupies residues 162 to 246 (NEPHMPLNAT…DGSQPMDTNM (85 aa)). Positions 179–212 (PNSHPFPHSPNSSYPNSPGGSSSTYPHSPTSSDP) are enriched in low complexity. Pro residues predominate over residues 221-232 (DTPPPAYLPPED). The MH2 domain maps to 271–465 (WCSIVYYELN…SPHNPISSVS (195 aa)). The residue at position 322 (Thr322) is a Phosphothreonine; by MINK1, TNIK and MAP4K4. Positions 418–428 (KGWGAEYHRQD) are L3 loop. A phosphoserine mark is found at Ser463 and Ser465.

The protein belongs to the dwarfin/SMAD family. Found in a complex with SMAD4 and YY1. Interacts with HGS, NANOG and ZCCHC12. Upon C-terminus phosphorylation: forms trimers with another SMAD1 and the co-SMAD SMAD4. Interacts with PEBP2-alpha subunit, CREB-binding protein (CBP), p300, SMURF1, SMURF2, USP15 and HOXC8. Associates with ZNF423 or ZNF521 in response to BMP2 leading to activate transcription of BMP target genes. Interacts with SKOR1. Interacts (via MH2 domain) with LEMD3. Binding to LEMD3 results in at least a partial reduction of receptor-mediated phosphorylation. Forms a ternary complex with PSMB4 and OAZ1 before PSMB4 is incorporated into the 20S proteasome. Interacts (via MH2 domain) with FAM83G (via MH2 domain); in a SMAD4-independent manner. Interacts with ZC3H3. Interacts with TMEM119. Interacts (via MH1 and MH2 domains) with ZNF8. Interacts with RANBP3L; the interaction increases when SMAD1 is not phosphorylated and mediates SMAD1 nuclear export. Interacts with EGR1; this interaction inhibits SMAD1 dephosphorylation. Interacts with SMAD6. Interacts with YAP1. Interacts with MTMR4; negatively regulates BMP signaling through SMAD1 dephosphorylation and retention in endosomes. Post-translationally, phosphorylation of the C-terminal SVS motif by BMP type 1 receptor kinase activates SMAD1 by promoting dissociation from the receptor and trimerization with SMAD4. Phosphorylation by ERK2 MAP kinase in response to EGF or HGF prevents SMAD1 nuclear accumulation and transcriptional activity in response to BMP. Dephosphorylation, probably by PPM1A, induces its export from the nucleus to the cytoplasm. Dephosphorylation is inhibited by association with EGR1. Phosphorylation by CDK8/9 creates binding sites for YAP1, and subsequent phosphorylation by GSK3 switches off YAP1 binding and adds binding sites for SMURF1. In terms of processing, ubiquitinated by SMAD-specific E3 ubiquitin ligase SMURF1, leading to its degradation. Monoubiquitinated, leading to prevent DNA-binding. Deubiquitination by USP15 alleviates inhibition and promotes activation of TGF-beta target genes. Dephosphorylation, probably by PPM1A, induces its export from the nucleus to the cytoplasm. Phospho-SMAD1 is ubiquitinated by CHIP leading to disruption of the SMAD1-SMAD4 complex. In terms of tissue distribution, ubiquitous.

The protein localises to the cytoplasm. It is found in the nucleus. Its function is as follows. Transcriptional modulator that plays a role in various cellular processes, including embryonic development, cell differentiation, and tissue homeostasis. Upon BMP ligand binding to their receptors at the cell surface, is phosphorylated by activated type I BMP receptors (BMPRIs) and associates with SMAD4 to form a heteromeric complex which translocates into the nucleus acting as transcription factor. In turn, the hetero-trimeric complex recognizes cis-regulatory elements containing Smad Binding Elements (SBEs) to modulate the outcome of the signaling network. SMAD1/OAZ1/PSMB4 complex mediates the degradation of the CREBBP/EP300 repressor SNIP1. Positively regulates BMP4-induced expression of odontogenic development regulator MSX1 following IPO7-mediated nuclear import. In Mus musculus (Mouse), this protein is Mothers against decapentaplegic homolog 1 (Smad1).